The chain runs to 57 residues: Cold shock protein CspB (57 aa).

The region spanning 1-57 (IKWFNSEKGFGFIEVEGQDDVFVHFSAIQGEGFKCLEEGQAVSFEIVEGNRGPQAAN) is the CSD domain.

Homodimer.

It localises to the cytoplasm. Affects cell viability at low temperatures. This is Cold shock protein CspB (cspB) from Sporosarcina globispora (Bacillus globisporus).